The chain runs to 156 residues: Small ribosomal subunit protein uS7c (156 aa).

This sequence belongs to the universal ribosomal protein uS7 family. In terms of assembly, part of the 30S ribosomal subunit.

The protein localises to the plastid. It is found in the chloroplast. Its function is as follows. One of the primary rRNA binding proteins, it binds directly to 16S rRNA where it nucleates assembly of the head domain of the 30S subunit. This Mesostigma viride (Green alga) protein is Small ribosomal subunit protein uS7c (rps7).